A 902-amino-acid chain; its full sequence is Gamma-tubulin complex component 2 (902 aa).

Tyrosine 83 is modified (phosphotyrosine). Positions glutamate 875–glutamine 902 are disordered.

It belongs to the TUBGCP family. As to quaternary structure, component of the gamma-tubulin ring complex (gTuRC) consisting of TUBGCP2, TUBGCP3, TUBGCP4, TUBGCP5 and TUBGCP6 and gamma-tubulin TUBG1 or TUBG2. TUBGCP2, TUBGCP3, TUBGCP4, TUBGCP5 and TUBGCP6 assemble in a 5:5:2:1:1 stoichiometry; each is associated with a gamma-tubulin, thereby arranging 14 gamma-tubulins in a helical manner. Gamma-tubulin at the first position is blocked by TUBGCP3 at the last position, allowing 13 protafilaments to grow into a microtubule. The gTuRC (via TUBGCP3 and TUBGCP6) interacts with ACTB and MZT1; the interactions form a luminal bridge that stabilizes the initial structure during complex assembly. The gTuRC (via TUBGCP2) interacts with MZT2A/MZT2B and CDK5RAP2 (via CM1 motif); the interactions play a role in gTuRC activation. Interacts with ATF5; the ATF5:PCNT:polyglutamylated tubulin (PGT) tripartite unites the mother centriole and the pericentriolar material (PCM) in the centrosome.

The protein localises to the cytoplasm. It is found in the cytoskeleton. The protein resides in the microtubule organizing center. It localises to the centrosome. Its function is as follows. Component of the gamma-tubulin ring complex (gTuRC) which mediates microtubule nucleation. The gTuRC regulates the minus-end nucleation of alpha-beta tubulin heterodimers that grow into microtubule protafilaments, a critical step in centrosome duplication and spindle formation. Plays a role in neuronal migration. In Pongo abelii (Sumatran orangutan), this protein is Gamma-tubulin complex component 2 (TUBGCP2).